The primary structure comprises 486 residues: Deleted in azoospermia protein 3 (486 aa).

The segment covering 1 to 10 (MSAANPETPN) has biased composition (polar residues). Residues 1–27 (MSAANPETPNSTISREASTQSSSAAAS) are disordered. A compositionally biased stretch (low complexity) spans 11–27 (STISREASTQSSSAAAS). One can recognise an RRM domain in the interval 40–115 (NTVFVGGIDA…KKLKLGPAIR (76 aa)). DAZ domains lie at 167-190 (AYSA…YNYQ), 191-214 (EYPT…YNYQ), 215-238 (PFPA…YNYQ), 239-262 (AFPA…YNYQ), 263-286 (PFPA…YNYQ), 287-310 (AFPA…YNYQ), 311-334 (AFPA…YNYQ), 335-358 (AFPA…YNYQ), 359-382 (AFPA…YNYQ), 383-406 (AFPA…YNYQ), 407-430 (AFPA…YNYQ), and 431-454 (AFPA…YNYQ).

The protein belongs to the RRM DAZ family. Forms a heterodimer with BOLL and DAZL. Interacts with PUM2, DAZAP1, DAZAP2, DZIP1 and DZIP3. As to expression, testis specific.

Its subcellular location is the cytoplasm. The protein localises to the nucleus. Functionally, RNA-binding protein that plays an essential role in spermatogenesis. May act by binding to the 3'-UTR of mRNAs and regulating their translation. The sequence is that of Deleted in azoospermia protein 3 (DAZ3) from Homo sapiens (Human).